A 214-amino-acid chain; its full sequence is Pyridoxine/pyridoxamine 5'-phosphate oxidase (214 aa).

Residues 9–12 (RREY) and K67 each bind substrate. Residues 62 to 67 (RTVLLK), 77 to 78 (YS), R83, K84, and Q106 each bind FMN. 3 residues coordinate substrate: Y124, R128, and S132. FMN-binding positions include 141–142 (QS) and W186. 192 to 194 (RLH) contributes to the substrate binding site. R196 is an FMN binding site.

The protein belongs to the pyridoxamine 5'-phosphate oxidase family. Homodimer. Requires FMN as cofactor.

It catalyses the reaction pyridoxamine 5'-phosphate + O2 + H2O = pyridoxal 5'-phosphate + H2O2 + NH4(+). It carries out the reaction pyridoxine 5'-phosphate + O2 = pyridoxal 5'-phosphate + H2O2. It participates in cofactor metabolism; pyridoxal 5'-phosphate salvage; pyridoxal 5'-phosphate from pyridoxamine 5'-phosphate: step 1/1. It functions in the pathway cofactor metabolism; pyridoxal 5'-phosphate salvage; pyridoxal 5'-phosphate from pyridoxine 5'-phosphate: step 1/1. In terms of biological role, catalyzes the oxidation of either pyridoxine 5'-phosphate (PNP) or pyridoxamine 5'-phosphate (PMP) into pyridoxal 5'-phosphate (PLP). The polypeptide is Pyridoxine/pyridoxamine 5'-phosphate oxidase (Porphyromonas gingivalis (strain ATCC BAA-308 / W83)).